The following is a 552-amino-acid chain: WAP, Kazal, immunoglobulin, Kunitz and NTR domain-containing protein 1 (552 aa).

Residues 1-25 form the signal peptide; it reads MPAPQPLLPLLFAFVLIHLTSETNL. A WAP domain is found at 29-82; the sequence is PGSHPGMCPNQLSPHLWVDAQSTCERECTRDQDCAASEKCCTNVCGLQSCVAAR. 17 disulfides stabilise this stretch: C36-C69, C52-C73, C56-C68, C62-C78, C120-C150, C124-C143, C132-C161, C211-C267, C303-C355, C310-C338, C330-C351, C363-C413, C372-C396, C388-C409, C421-C493, C424-C495, and C435-C544. The region spanning 112 to 163 is the Kazal-like domain; that stretch reads WDGQPVCRCRDRCEKEPSFTCASDGLTYYNRCYMDAEACLRGLHLHVVPCKH. In terms of domain architecture, Ig-like C2-type spans 190-283; sequence PALYNSPSPQ…GLLRADFPLS (94 aa). BPTI/Kunitz inhibitor domains follow at residues 289–355 and 363–413; these read TTQD…QQAC and CALP…EDAC. The NTR domain maps to 413 to 544; the sequence is CPVPRTPPCR…IVELLEKKAC (132 aa). A glycan (N-linked (GlcNAc...) asparagine) is linked at N497.

It belongs to the WFIKKN family. In terms of tissue distribution, preferentially expressed in the developing inner ear and the dorsal neural tube.

It is found in the secreted. Protease-inhibitor that contains multiple distinct protease inhibitor domains. Probably has serine protease- and metalloprotease-inhibitor activity. This chain is WAP, Kazal, immunoglobulin, Kunitz and NTR domain-containing protein 1 (Wfikkn1), found in Rattus norvegicus (Rat).